We begin with the raw amino-acid sequence, 643 residues long: MTADSLRERLKSQNADYSLLNTSQASNRSAFEDKMSPVCKSRYVNDNQRLEQSRITMLETRIKWHIILLTGFSIDHLVLNSSFTSAILLFGFFPSYVNSSISLFVIIYSLIMIASYAFEIKFPNALKQLVYNKVQSKPPRPESSKSTPIVPDAQNVLDTSVQSNDLSWVDAHRFGTPSFKSSQLQQSPSPNKKSPSYSQVMSNVSVSDTSGILEDTKGGWKSPAVYGKSNESIHTRKQLDVLLRSNQDEIPVDMNTSTFSSIWSVFGLGRSGQISANNTWQVSEEITNDGNTNSSYRMKIGKNGRTEVKMLRRGKDGEIEEEDEDELVRLHKILNAAKLTPEGKTGILKRSNSIDRAGIRSRRRSHSSPERSTSTENEIRYQTGELLTEDQQKRAEFMTRAWIRNTILEPLAEHIDKVNKILDKEHANPPLRVGVSSVDALKLAAIERDSLKSSDLPFLLPFLSVHPNQKYLISRIKELCATQFMDAYKWNSGGSEPTDDNDQMTRLVRREWNDSLPTDAVLVFDIFLAYMDAQLNSNCLVGDSRLDQPFTSRFCVKNAQKPSSAQRTPFSFYLHMVTKSPPHAEFVHIDENGYAIKCNVLRQSPNLFRAIAQFIHFVKHENHGYLDQTSIGPSGINMTYVLA.

The segment covering 179–199 (FKSSQLQQSPSPNKKSPSYSQ) has biased composition (low complexity). Disordered regions lie at residues 179–200 (FKSS…YSQV) and 349–377 (KRSN…STEN).

This is an uncharacterized protein from Caenorhabditis elegans.